Reading from the N-terminus, the 197-residue chain is Putative peptidyl-prolyl cis-trans isomerase (197 aa).

A PPIase cyclophilin-type domain is found at 14-195 (NEIKLIMHTN…HDITIDSIEI (182 aa)).

Belongs to the cyclophilin-type PPIase family.

It catalyses the reaction [protein]-peptidylproline (omega=180) = [protein]-peptidylproline (omega=0). In terms of biological role, PPIases accelerate the folding of proteins. It catalyzes the cis-trans isomerization of proline imidic peptide bonds in oligopeptides. This chain is Putative peptidyl-prolyl cis-trans isomerase, found in Staphylococcus saprophyticus subsp. saprophyticus (strain ATCC 15305 / DSM 20229 / NCIMB 8711 / NCTC 7292 / S-41).